Here is a 453-residue protein sequence, read N- to C-terminus: Homeobox protein meis3 (453 aa).

Positions 33–64 are disordered; it reads HHSLSQSAPYGSTGAAHRVPMPPGMGSNDGLK. The 84-residue stretch at 102–185 folds into the MEIS N-terminal domain; the sequence is GGDVCSSDSF…PIDLVIDDRD (84 aa). The tract at residues 192 to 272 is disordered; the sequence is LEDFTGSCTS…RDKKRNKKRG (81 aa). Positions 197–209 are enriched in polar residues; the sequence is GSCTSLSDQNNSW. A compositionally biased stretch (low complexity) spans 218-230; sequence STHSGTPGPSSGG. The segment covering 231-242 has biased composition (polar residues); it reads LASQSGDNSSEQ. A DNA-binding region (homeobox) is located at residues 267 to 329; it reads RNKKRGIFPK…NARRRIVQPM (63 aa).

This sequence belongs to the TALE/MEIS homeobox family.

It localises to the nucleus. Its function is as follows. A caudalizing protein which is required to pattern the anterior/posterior (A/P) axis during central nervous system (CNS) formation. Inhibits anterior neural expression and acts as a transcriptional activator to induce posterior neural gene expression. Maintains a proper A/P balance required for hindbrain formation by activating the FGF/MAPK pathway, which modulates the planar cell polarity (PCP) pathway. Interacts with retinoid signaling during hindbrain patterning. This is Homeobox protein meis3 from Xenopus tropicalis (Western clawed frog).